We begin with the raw amino-acid sequence, 204 residues long: Large ribosomal subunit protein eL15 (204 aa).

Belongs to the eukaryotic ribosomal protein eL15 family. As to quaternary structure, component of the large ribosomal subunit.

It is found in the cytoplasm. Component of the large ribosomal subunit. The ribosome is a large ribonucleoprotein complex responsible for the synthesis of proteins in the cell. The protein is Large ribosomal subunit protein eL15 (rpl15) of Siniperca knerii (Big-eye mandarin fish).